A 457-amino-acid chain; its full sequence is ATP synthase subunit beta (457 aa).

150-157 (GGAGVGKT) provides a ligand contact to ATP.

Belongs to the ATPase alpha/beta chains family. In terms of assembly, F-type ATPases have 2 components, CF(1) - the catalytic core - and CF(0) - the membrane proton channel. CF(1) has five subunits: alpha(3), beta(3), gamma(1), delta(1), epsilon(1). CF(0) has three main subunits: a(1), b(2) and c(9-12). The alpha and beta chains form an alternating ring which encloses part of the gamma chain. CF(1) is attached to CF(0) by a central stalk formed by the gamma and epsilon chains, while a peripheral stalk is formed by the delta and b chains.

Its subcellular location is the cell membrane. The catalysed reaction is ATP + H2O + 4 H(+)(in) = ADP + phosphate + 5 H(+)(out). Functionally, produces ATP from ADP in the presence of a proton gradient across the membrane. The catalytic sites are hosted primarily by the beta subunits. This is ATP synthase subunit beta from Baumannia cicadellinicola subsp. Homalodisca coagulata.